Reading from the N-terminus, the 446-residue chain is Glutamate--tRNA ligase (446 aa).

The 'HIGH' region motif lies at 9–19; the sequence is PSPTGLLHVGN. The 'KMSKS' region signature appears at 240–244; sequence GLSKR. Lys-243 serves as a coordination point for ATP.

It belongs to the class-I aminoacyl-tRNA synthetase family. Glutamate--tRNA ligase type 1 subfamily. As to quaternary structure, monomer.

Its subcellular location is the cytoplasm. It catalyses the reaction tRNA(Glu) + L-glutamate + ATP = L-glutamyl-tRNA(Glu) + AMP + diphosphate. Its function is as follows. Catalyzes the attachment of glutamate to tRNA(Glu) in a two-step reaction: glutamate is first activated by ATP to form Glu-AMP and then transferred to the acceptor end of tRNA(Glu). This chain is Glutamate--tRNA ligase, found in Azospirillum brasilense.